A 273-amino-acid chain; its full sequence is Undecaprenyl-diphosphatase (273 aa).

The next 9 membrane-spanning stretches (helical) occupy residues 1 to 21 (MEPIQGVVLGIIQGLTEFLPV), 39 to 59 (PALFFDVSLHMGTLLAVLIVF), 63 to 83 (LGMMAVSVGRGIVAMFGGIAP), 92 to 112 (LKLALLIVVGSVPTAILGLGL), 118 to 138 (LFFSLPLVGAMLLVTGTLLWL), 165 to 185 (GLAVLPGISRSGATIAAGLFL), 195 to 215 (FSFLLCIPAIVGAELLSAVDL), 225 to 245 (ATVLGSLTAFVVGYGALKVLI), and 252 to 272 (RFYLFAPYCFILGGVTLWIGM).

It belongs to the UppP family.

The protein resides in the cell inner membrane. The enzyme catalyses di-trans,octa-cis-undecaprenyl diphosphate + H2O = di-trans,octa-cis-undecaprenyl phosphate + phosphate + H(+). Its function is as follows. Catalyzes the dephosphorylation of undecaprenyl diphosphate (UPP). Confers resistance to bacitracin. The protein is Undecaprenyl-diphosphatase of Desulfosudis oleivorans (strain DSM 6200 / JCM 39069 / Hxd3) (Desulfococcus oleovorans).